Consider the following 185-residue polypeptide: Ribosome-recycling factor (185 aa).

Belongs to the RRF family.

It localises to the cytoplasm. Its function is as follows. Responsible for the release of ribosomes from messenger RNA at the termination of protein biosynthesis. May increase the efficiency of translation by recycling ribosomes from one round of translation to another. The sequence is that of Ribosome-recycling factor from Bacillus licheniformis (strain ATCC 14580 / DSM 13 / JCM 2505 / CCUG 7422 / NBRC 12200 / NCIMB 9375 / NCTC 10341 / NRRL NRS-1264 / Gibson 46).